A 447-amino-acid polypeptide reads, in one-letter code: Hemogen (447 aa).

Residues 1-91 form a disordered region; sequence MDLGKDQSLS…EMKVELPSQL (91 aa). Residues 7–86 form a necessary for nuclear localization region; that stretch reads QSLSKLHQTP…RQQNTEMKVE (80 aa). Basic and acidic residues-rich tracts occupy residues 14-25 and 35-49; these read QTPDHHQEESHV and RNRE…EAQE. The span at 59–78 shows a compositional bias: basic residues; it reads EKKHKRQRTGKRSERGRKRQ. Phosphoserine occurs at positions 89 and 122. Residues 137-156 are disordered; the sequence is QESVTLQENSSEYQATAVQN. S200 carries the post-translational modification Phosphoserine. Disordered regions lie at residues 210 to 280 and 306 to 337; these read AKVL…MAVP and AMSK…PGSE. T217 is modified (phosphothreonine). Residues 306-316 are compositionally biased toward basic and acidic residues; the sequence is AMSKDPSHKTT.

Its subcellular location is the nucleus. In terms of biological role, regulates the proliferation and differentiation of hematopoietic cells. Overexpression block the TPA-induced megakaryocytic differentiation in the K562 cell model. May also prevent cell apoptosis through the activation of the nuclear factor-kappa B (NF-kB). The protein is Hemogen (HEMGN) of Bos taurus (Bovine).